Consider the following 211-residue polypeptide: Ribosomal RNA large subunit methyltransferase E (211 aa).

S-adenosyl-L-methionine contacts are provided by Gly-60, Trp-62, Asp-80, Asp-96, and Asp-121. Lys-161 (proton acceptor) is an active-site residue.

Belongs to the class I-like SAM-binding methyltransferase superfamily. RNA methyltransferase RlmE family.

Its subcellular location is the cytoplasm. The catalysed reaction is uridine(2552) in 23S rRNA + S-adenosyl-L-methionine = 2'-O-methyluridine(2552) in 23S rRNA + S-adenosyl-L-homocysteine + H(+). Specifically methylates the uridine in position 2552 of 23S rRNA at the 2'-O position of the ribose in the fully assembled 50S ribosomal subunit. The polypeptide is Ribosomal RNA large subunit methyltransferase E (Cellvibrio japonicus (strain Ueda107) (Pseudomonas fluorescens subsp. cellulosa)).